The sequence spans 312 residues: DNA-directed RNA polymerase subunit alpha (312 aa).

The tract at residues Met-1–Asp-226 is alpha N-terminal domain (alpha-NTD). The tract at residues Lys-243–Asp-312 is alpha C-terminal domain (alpha-CTD).

The protein belongs to the RNA polymerase alpha chain family. As to quaternary structure, homodimer. The RNAP catalytic core consists of 2 alpha, 1 beta, 1 beta' and 1 omega subunit. When a sigma factor is associated with the core the holoenzyme is formed, which can initiate transcription.

It carries out the reaction RNA(n) + a ribonucleoside 5'-triphosphate = RNA(n+1) + diphosphate. DNA-dependent RNA polymerase catalyzes the transcription of DNA into RNA using the four ribonucleoside triphosphates as substrates. The chain is DNA-directed RNA polymerase subunit alpha from Lactobacillus delbrueckii subsp. bulgaricus (strain ATCC 11842 / DSM 20081 / BCRC 10696 / JCM 1002 / NBRC 13953 / NCIMB 11778 / NCTC 12712 / WDCM 00102 / Lb 14).